Here is a 416-residue protein sequence, read N- to C-terminus: Notoamide biosynthesis cluster protein N' (416 aa).

A signal peptide spans 1–16 (MRAALLTLAFTALAAA). N119 and N262 each carry an N-linked (GlcNAc...) asparagine glycan.

In terms of biological role, part of the gene cluster that mediates the biosynthesis of notoamide, a fungal indole alkaloid that belongs to a family of natural products containing a characteristic bicyclo[2.2.2]diazaoctane core. The first step of notoamide biosynthesis involves coupling of L-proline and L-tryptophan by the bimodular NRPS notE', to produce cyclo-L-tryptophan-L-proline called brevianamide F. The reverse prenyltransferase notF' then acts as a deoxybrevianamide E synthase and converts brevianamide F to deoxybrevianamide E via reverse prenylation at C-2 of the indole ring leading to the bicyclo[2.2.2]diazaoctane core. Deoxybrevianamide E is further hydroxylated at C-6 of the indole ring, likely catalyzed by the cytochrome P450 monooxygenase notG', to yield 6-hydroxy-deoxybrevianamide E. 6-hydroxy-deoxybrevianamide E is a specific substrate of the prenyltransferase notC' for normal prenylation at C-7 to produce 6-hydroxy-7-prenyl-deoxybrevianamide, also called notoamide S. As the proposed pivotal branching point in notoamide biosynthesis, notoamide S can be diverted to notoamide E through an oxidative pyran ring closure putatively catalyzed by either notH' cytochrome P450 monooxygenase or the notD' FAD-linked oxidoreductase. This step would be followed by an indole 2,3-epoxidation-initiated pinacol-like rearrangement catalyzed by the notB' FAD-dependent monooxygenase leading to the formation of notoamide C and notoamide D. On the other hand notoamide S is converted to notoamide T by notH' (or notD'), a bifunctional oxidase that also functions as the intramolecular Diels-Alderase responsible for generation of (-)-notoamide T. To generate antipodal (+)-notoaminide T, notH (or notD) in Aspergillus strain MF297-2 is expected to catalyze a Diels-Alder reaction leading to the opposite stereochemistry. The remaining oxidoreductase notD' (or notH') likely catalyzes the oxidative pyran ring formation to yield (-)-stephacidin A. The FAD-dependent monooxygenase notI' is highly similar to notB' and is predicted to catalyze a similar conversion from (-)-stephacidin A to (+)-notoamide B via the 2,3-epoxidation of (-)-stephacidin A followed by a pinacol-type rearrangement. Finally, it remains unclear which enzyme could be responsible for the final hydroxylation steps leading to notoamide A and sclerotiamide. The function of notN' in the notoamide biosynthesis has not been determined yet. The chain is Notoamide biosynthesis cluster protein N' from Aspergillus versicolor.